The primary structure comprises 308 residues: Aspartate carbamoyltransferase catalytic subunit (308 aa).

Residues Arg-51 and Thr-52 each contribute to the carbamoyl phosphate site. Lys-80 provides a ligand contact to L-aspartate. Carbamoyl phosphate-binding residues include Arg-101, His-129, and Gln-132. 2 residues coordinate L-aspartate: Arg-162 and Arg-224. Positions 263 and 264 each coordinate carbamoyl phosphate.

This sequence belongs to the aspartate/ornithine carbamoyltransferase superfamily. ATCase family. As to quaternary structure, heterododecamer (2C3:3R2) of six catalytic PyrB chains organized as two trimers (C3), and six regulatory PyrI chains organized as three dimers (R2).

The catalysed reaction is carbamoyl phosphate + L-aspartate = N-carbamoyl-L-aspartate + phosphate + H(+). Its pathway is pyrimidine metabolism; UMP biosynthesis via de novo pathway; (S)-dihydroorotate from bicarbonate: step 2/3. In terms of biological role, catalyzes the condensation of carbamoyl phosphate and aspartate to form carbamoyl aspartate and inorganic phosphate, the committed step in the de novo pyrimidine nucleotide biosynthesis pathway. In Bacteroides fragilis (strain ATCC 25285 / DSM 2151 / CCUG 4856 / JCM 11019 / LMG 10263 / NCTC 9343 / Onslow / VPI 2553 / EN-2), this protein is Aspartate carbamoyltransferase catalytic subunit.